Here is a 335-residue protein sequence, read N- to C-terminus: Heme A synthase (335 aa).

A run of 8 helical transmembrane segments spans residues 9 to 29 (VAIW…IGGF), 90 to 110 (YVHR…FIYF), 120 to 140 (VVIR…TGWY), 156 to 176 (MLTL…YQFF), 197 to 217 (VGII…VAGL), 255 to 275 (VQFI…VLTI), 283 to 303 (VYVM…TLLL), and 309 to 329 (IAIS…CFLC). A heme-binding site is contributed by histidine 259. Histidine 313 provides a ligand contact to heme.

This sequence belongs to the COX15/CtaA family. Type 2 subfamily. Interacts with CtaB. Heme b serves as cofactor.

It is found in the cell membrane. The catalysed reaction is Fe(II)-heme o + 2 A + H2O = Fe(II)-heme a + 2 AH2. The protein operates within porphyrin-containing compound metabolism; heme A biosynthesis; heme A from heme O: step 1/1. Catalyzes the conversion of heme O to heme A by two successive hydroxylations of the methyl group at C8. The first hydroxylation forms heme I, the second hydroxylation results in an unstable dihydroxymethyl group, which spontaneously dehydrates, resulting in the formyl group of heme A. The chain is Heme A synthase from Wolbachia sp. subsp. Brugia malayi (strain TRS).